The following is a 219-amino-acid chain: Thiopurine S-methyltransferase (219 aa).

S-adenosyl-L-methionine-binding residues include Trp-10, Leu-45, Glu-66, and Arg-130.

It belongs to the class I-like SAM-binding methyltransferase superfamily. TPMT family.

Its subcellular location is the cytoplasm. It carries out the reaction S-adenosyl-L-methionine + a thiopurine = S-adenosyl-L-homocysteine + a thiopurine S-methylether.. The protein is Thiopurine S-methyltransferase of Psychrobacter cryohalolentis (strain ATCC BAA-1226 / DSM 17306 / VKM B-2378 / K5).